We begin with the raw amino-acid sequence, 366 residues long: tRNA-specific 2-thiouridylase MnmA (366 aa).

ATP contacts are provided by residues 10-17 and Met36; that span reads GLSGGVDS. The tract at residues 96–98 is interaction with target base in tRNA; that stretch reads NPD. Cys101 serves as the catalytic Nucleophile. A disulfide bridge connects residues Cys101 and Cys197. Gly125 contributes to the ATP binding site. The interval 147-149 is interaction with tRNA; the sequence is KDQ. The active-site Cysteine persulfide intermediate is Cys197. Positions 309 to 310 are interaction with tRNA; sequence RY.

It belongs to the MnmA/TRMU family.

The protein resides in the cytoplasm. The catalysed reaction is S-sulfanyl-L-cysteinyl-[protein] + uridine(34) in tRNA + AH2 + ATP = 2-thiouridine(34) in tRNA + L-cysteinyl-[protein] + A + AMP + diphosphate + H(+). Its function is as follows. Catalyzes the 2-thiolation of uridine at the wobble position (U34) of tRNA, leading to the formation of s(2)U34. This chain is tRNA-specific 2-thiouridylase MnmA, found in Alkalilimnicola ehrlichii (strain ATCC BAA-1101 / DSM 17681 / MLHE-1).